Here is an 89-residue protein sequence, read N- to C-terminus: Small ribosomal subunit protein uS15 (89 aa).

Over residues 1 to 21 the composition is skewed to basic and acidic residues; that stretch reads MSIAAERKAEVIKTNARKDGD. The disordered stretch occupies residues 1-24; it reads MSIAAERKAEVIKTNARKDGDTGS.

The protein belongs to the universal ribosomal protein uS15 family. In terms of assembly, part of the 30S ribosomal subunit. Forms a bridge to the 50S subunit in the 70S ribosome, contacting the 23S rRNA.

Its function is as follows. One of the primary rRNA binding proteins, it binds directly to 16S rRNA where it helps nucleate assembly of the platform of the 30S subunit by binding and bridging several RNA helices of the 16S rRNA. Functionally, forms an intersubunit bridge (bridge B4) with the 23S rRNA of the 50S subunit in the ribosome. The sequence is that of Small ribosomal subunit protein uS15 from Rhodopseudomonas palustris (strain BisA53).